A 741-amino-acid polypeptide reads, in one-letter code: Ion-translocating oxidoreductase complex subunit C (741 aa).

4Fe-4S ferredoxin-type domains lie at 369 to 397 (GEPQEEQSCIRCSACADACPADLLPQQLY) and 407 to 436 (KATTHNIADCIECGACAWVCPSNIPLVQYF). Positions 377, 380, 383, 387, 416, 419, 422, and 426 each coordinate [4Fe-4S] cluster. A disordered region spans residues 627-654 (IARAKARKLEQQQQANAEPEEQVDPRKA).

This sequence belongs to the 4Fe4S bacterial-type ferredoxin family. RnfC subfamily. In terms of assembly, the complex is composed of six subunits: RsxA, RsxB, RsxC, RsxD, RsxE and RsxG. [4Fe-4S] cluster serves as cofactor.

It localises to the cell inner membrane. Part of a membrane-bound complex that couples electron transfer with translocation of ions across the membrane. Required to maintain the reduced state of SoxR. The sequence is that of Ion-translocating oxidoreductase complex subunit C from Escherichia coli O127:H6 (strain E2348/69 / EPEC).